Consider the following 229-residue polypeptide: Protein FAM3C (229 aa).

The N-terminal stretch at 1 to 24 (MRIAGAIKFVIAVALFLLTFYVIS) is a signal peptide. 2 disulfide bridges follow: Cys59-Cys87 and Cys65-Cys222. The GG-type lectin domain maps to 68–226 (KHFAFKIASG…VEMEGCIPQK (159 aa)).

It belongs to the FAM3 family.

Its subcellular location is the secreted. Its function is as follows. Involved in retinal laminar formation. The sequence is that of Protein FAM3C (fam3c) from Xenopus tropicalis (Western clawed frog).